The primary structure comprises 302 residues: tRNA dimethylallyltransferase (302 aa).

12–19 (GPTASGKS) provides a ligand contact to ATP. A substrate-binding site is contributed by 14-19 (TASGKS). Residues 37–40 (DSMQ) are interaction with substrate tRNA.

It belongs to the IPP transferase family. As to quaternary structure, monomer. The cofactor is Mg(2+).

The catalysed reaction is adenosine(37) in tRNA + dimethylallyl diphosphate = N(6)-dimethylallyladenosine(37) in tRNA + diphosphate. Its function is as follows. Catalyzes the transfer of a dimethylallyl group onto the adenine at position 37 in tRNAs that read codons beginning with uridine, leading to the formation of N6-(dimethylallyl)adenosine (i(6)A). In Corynebacterium diphtheriae (strain ATCC 700971 / NCTC 13129 / Biotype gravis), this protein is tRNA dimethylallyltransferase.